Consider the following 421-residue polypeptide: Accessory Sec system protein translocase subunit SecY2 (421 aa).

10 helical membrane passes run 17 to 37, 69 to 89, 102 to 122, 139 to 159, 165 to 185, 204 to 224, 254 to 274, 299 to 319, 358 to 378, and 383 to 403; these read LWTS…IPGV, FALG…LTLI, TFLF…IAII, FGAM…LVWL, ILGI…NWPT, VILM…TVVV, PAGG…QYIL, PLGV…FAFI, SFVG…FGII, and TQYA…INII.

Belongs to the SecY/SEC61-alpha family. SecY2 subfamily. Component of the accessory SecA2/SecY2 protein translocase complex required to export cell wall proteins. May form heterotrimers with SecE and SecG subunits.

It is found in the cell membrane. Functionally, part of the accessory SecA2/SecY2 system specifically required for export of possible cell wall proteins. The central subunit of a protein translocation channel. This is Accessory Sec system protein translocase subunit SecY2 from Leuconostoc gelidum subsp. gasicomitatum (strain DSM 15947 / CCUG 46042 / CECT 5767 / JCM 12535 / LMG 18811 / NBRC 113245 / TB1-10) (Leuconostoc gasicomitatum).